The primary structure comprises 1183 residues: MSVQWTDEQQRAIDARGGHILVSAAAGSGKTAVLVERLTQRVINQEDPLTADRILVATFTNAAAKEMKTRVIEAIEAKIKVAPDDLYLKKQRQMMNRAQITTIHSFCLSILRENYYRIGLDPAFRIAEEAELLLLQDDVLEEVFESFYASADPAFYELIDSYTSDRDDQAMLTLISNLYRFSRSLPDPEAFYDHLIAQYDQPIDPDESSLLTRLFELEWERVGPVINRYMELSYRLRQSGYDEMADLLVQDVTPVRRINPEQDRWTTVALAFQAVEFGRWKGIRGDEEMKKFQTERTRLVSDLKKMRDLFVEKDGVDYLEDLRSQLGHVEMIVTLVRSFSAAYLEAKQQRGIVDFSDLEHFALAILEENGEPTDVARLLQERFIEVLVDEYQDTNEVQERILRLVSKSDEATGNLFMVGDVKQSIYKFRHAEPGLFLNKFKRFQQTEVGTRIDLTKNFRSRLEVLDGTNHIFRQVMDEAVGEIDYDEAAYLRLGNLGYVDSTQVDPELLLVDQTDTNKEELEAQVIATRIIEMVNDENPYLVFDAKQKRFRKCEYRDIVILVRSRGKRVQALVDVFEQYELPVYADTTGGYFQATEIQIMMSLLKTIDNPLQDIPFASVLRSPIFGLTDRDLGRIRAKSKDGSFYEAAILVAKEQTPLGLRVDEALNQLHHWRTEARGKSLASLIRSLFDQTGYFEYVGCLNGGRSRQANLNALYERAHQYEASGYRGLYRFLRLIHRLVERGEDFSEARSLGEDEDVVRIMTIHQSKGLEFPVTIVSQLGKQFNKQDQIQAIQLHKTYGIALDAIDPVKRLRSGTLLKEVIRREMDREMKAEEMRVLYVAMTRAKEKLILVGAIKGLEDQLIKWQDQPLDELLLPEMDRRNAKTYADWVVPAVLRNFLLSEDGPRWSFRIIALDEIAPYQELTKMVEQLEHVRVLEKIDHAGDETLNIQIEAAFAYQYPYQVATDTAAKQTVTELKRTEQLERAAFESTHRQSTYYRTPQFLGPTLTGAERGTVLHLAMQLYESGRSFEEQILDWEQAERISSLEAQTMREAIPELTTFLASDTGQLFEQRLLAGEVYRELPFTYKIDSARFRSDWHGPSDQAVMQGIVDCLIRDGDTYILLDYKSDQVFETTDNQNQAEVLRTRYATQLNLYQEALEAILHIRISRKLIYAFALHEVIEIY.

Residues 3–461 (VQWTDEQQRA…IDLTKNFRSR (459 aa)) form the UvrD-like helicase ATP-binding domain. An ATP-binding site is contributed by 24-31 (AAAGSGKT). Positions 473–769 (RQVMDEAVGE…RIMTIHQSKG (297 aa)) constitute a UvrD-like helicase C-terminal domain.

Belongs to the helicase family. AddA subfamily. In terms of assembly, heterodimer of AddA and AddB/RexB. Mg(2+) serves as cofactor.

The catalysed reaction is Couples ATP hydrolysis with the unwinding of duplex DNA by translocating in the 3'-5' direction.. It carries out the reaction ATP + H2O = ADP + phosphate + H(+). The heterodimer acts as both an ATP-dependent DNA helicase and an ATP-dependent, dual-direction single-stranded exonuclease. Recognizes the chi site generating a DNA molecule suitable for the initiation of homologous recombination. The AddA nuclease domain is required for chi fragment generation; this subunit has the helicase and 3' -&gt; 5' nuclease activities. This is ATP-dependent helicase/nuclease subunit A from Exiguobacterium sibiricum (strain DSM 17290 / CCUG 55495 / CIP 109462 / JCM 13490 / 255-15).